The following is a 664-amino-acid chain: Cyclic nucleotide-gated channel alpha-2 (664 aa).

The segment covering 1–11 (MTEKTNGVKSS) has biased composition (polar residues). A disordered region spans residues 1–49 (MTEKTNGVKSSPANNHNHHAPPAIKANGKDDHRTSSRPHSAADDDTSSE). The Cytoplasmic portion of the chain corresponds to 1–144 (MTEKTNGVKS…PAGDWYYCWL (144 aa)). The span at 12–23 (PANNHNHHAPPA) shows a compositional bias: low complexity. The chain crosses the membrane as a helical span at residues 145–166 (FVIAMPVLYNWCLLVARACFSD). At 167–176 (LQKGYYLVWL) the chain is on the extracellular side. Residues 177–197 (VLDYVSDVVYIADLFIRLRTG) form a helical membrane-spanning segment. Residues 198-222 (FLEQGLLVKDTKKLRDNYIHTLQFK) are Cytoplasmic-facing. The helical transmembrane segment at 223-241 (LDVASIIPTDLIYFAVDIH) threads the bilayer. At 242 to 246 (SPEVR) the chain is on the extracellular side. A helical membrane pass occupies residues 247–265 (FNRLLHFARMFEFFDRTET). Over 266-272 (RTNYPNI) the chain is Cytoplasmic. The interval 270–378 (PNIFRISNLV…GNVGSMISNM (109 aa)) is ion conduction pathway. A helical transmembrane segment spans residues 273 to 296 (FRISNLVLYILVIIHWNACIYYAI). The Extracellular segment spans residues 297–319 (SKSIGFGVDTWVYPNITDPEYGY). The next 2 helical transmembrane spans lie at 320-354 (LAREYIYCLYWSTLTLTTIGETPPPVKDEEYLFVI) and 355-379 (FDFLIGVLIFATIVGNVGSMISNMN). A selectivity filter region spans residues 337-340 (TIGE). The tract at residues 380 to 456 (ATRAEFQAKI…STLKKVRIFH (77 aa)) is C-linker. Residues 380 to 664 (ATRAEFQAKI…SPELAAADEP (285 aa)) lie on the Cytoplasmic side of the membrane. The cyclic nucleotide-binding domain stretch occupies residues 460–580 (AGLLVELVLK…EERGREILMK (121 aa)). Residues G520, S523, R536, and T537 each coordinate 3',5'-cyclic GMP. 3',5'-cyclic AMP-binding residues include R536 and T537. Residues 597-651 (VQEKLGQLETNMETLYTRFGRLLAEYTGAQQKLKQRITVLETKMKQNNEDDYLSD) are a coiled coil. Residues 641-664 (KQNNEDDYLSDGMNSPELAAADEP) form a disordered region.

It belongs to the cyclic nucleotide-gated cation channel (TC 1.A.1.5) family. CNGA2 subfamily. The olfactory cyclic nucleotide-gated channel is an heterotetramer composed of CNGA2, CNGA4 and CNGB1b subunits with 2:1:1 stoichiometry.

It localises to the cell projection. It is found in the cilium membrane. It catalyses the reaction Ca(2+)(in) = Ca(2+)(out). The catalysed reaction is Na(+)(in) = Na(+)(out). It carries out the reaction K(+)(in) = K(+)(out). The enzyme catalyses NH4(+)(in) = NH4(+)(out). It catalyses the reaction Rb(+)(in) = Rb(+)(out). The catalysed reaction is Li(+)(in) = Li(+)(out). It carries out the reaction Cs(+)(in) = Cs(+)(out). Pore-forming subunit of the olfactory cyclic nucleotide-gated channel. Operates in the cilia of olfactory sensory neurons where chemical stimulation of the odorant is converted to an electrical signal. Mediates odorant-induced cAMP-dependent Ca(2+) influx triggering neuron depolarization. The rise of intracellular Ca(2+) levels potentiates the olfactory response by activating Ca(2+)-dependent Cl(-) channels, but it also serves as a negative feedback signal to desensitize the channel for rapid adaptation to odorants. Conducts cAMP- and cGMP-gated ion currents, with permeability for monovalent and divalent cations. The chain is Cyclic nucleotide-gated channel alpha-2 from Homo sapiens (Human).